Consider the following 411-residue polypeptide: Floricaula/leafy-like protein (411 aa).

Residues 220 to 259 (PDTNYGSEQTKACKKQKRRRSKDSGEDGEERQREHPFIVT) form a disordered region. Residues 231–240 (ACKKQKRRRS) are compositionally biased toward basic residues. Residues 241–255 (KDSGEDGEERQREHP) show a composition bias toward basic and acidic residues. 3 DNA-binding regions span residues 252–256 (REHPF), 321–328 (NKPKMRHY), and 392–395 (YVPT).

The protein belongs to the FLO/LFY family. In terms of tissue distribution, expressed in vegetative buds and male cones but not in female cones, vascular tissue, roots or secondary needles.

It localises to the nucleus. Probable transcription factor. The sequence is that of Floricaula/leafy-like protein (FLL) from Pinus radiata (Monterey pine).